The primary structure comprises 678 residues: Alpha-L-arabinofuranosidase 1 (678 aa).

A signal peptide spans 1–33 (MDMESWKLLRSVCVLSFLLGSCFVYQSLRVVDA). Residues 152-239 (NIEEGKKYKV…WIDQVSAMPV (88 aa)) enclose the CBM-cenC domain. Residues N181, N362, N523, and N555 are each glycosylated (N-linked (GlcNAc...) asparagine).

Belongs to the glycosyl hydrolase 51 family. Expressed in roots, leaves, flowers, stems, siliques and seedlings. Observed in zones of cell proliferation, the vascular system and floral abscission zones. Expressed in the guard cells in stems, in xylem vessels and parenchyma cells surrounding the vessels, in the cambium and in the phloem, but not in the secondary xylem.

Its subcellular location is the secreted. It is found in the extracellular space. The protein localises to the extracellular matrix. It catalyses the reaction Hydrolysis of terminal non-reducing alpha-L-arabinofuranoside residues in alpha-L-arabinosides.. May be involved in the coordinated dissolution of the cell wall matrix during abscission and in the secondary cell wall formation in xylem vessels. Prefers arabinoxylan, but may also use pectic arabinans as substrates. The sequence is that of Alpha-L-arabinofuranosidase 1 (ASD1) from Arabidopsis thaliana (Mouse-ear cress).